We begin with the raw amino-acid sequence, 123 residues long: Putative iron-sulfur cluster insertion protein ErpA (123 aa).

Iron-sulfur cluster-binding residues include C51, C115, and C117.

It belongs to the HesB/IscA family. Homodimer. It depends on iron-sulfur cluster as a cofactor.

Required for insertion of 4Fe-4S clusters. In Bordetella avium (strain 197N), this protein is Putative iron-sulfur cluster insertion protein ErpA.